A 198-amino-acid chain; its full sequence is Nucleoside triphosphate pyrophosphatase (198 aa).

The Proton acceptor role is filled by D70.

It belongs to the Maf family. A divalent metal cation serves as cofactor.

It localises to the cytoplasm. The catalysed reaction is a ribonucleoside 5'-triphosphate + H2O = a ribonucleoside 5'-phosphate + diphosphate + H(+). The enzyme catalyses a 2'-deoxyribonucleoside 5'-triphosphate + H2O = a 2'-deoxyribonucleoside 5'-phosphate + diphosphate + H(+). In terms of biological role, nucleoside triphosphate pyrophosphatase. May have a dual role in cell division arrest and in preventing the incorporation of modified nucleotides into cellular nucleic acids. The sequence is that of Nucleoside triphosphate pyrophosphatase from Thermosynechococcus vestitus (strain NIES-2133 / IAM M-273 / BP-1).